A 420-amino-acid chain; its full sequence is CinA-like protein (420 aa).

Belongs to the CinA family.

The polypeptide is CinA-like protein (Geotalea uraniireducens (strain Rf4) (Geobacter uraniireducens)).